The primary structure comprises 418 residues: Serine hydroxymethyltransferase (418 aa).

(6S)-5,6,7,8-tetrahydrofolate contacts are provided by residues Leu-121 and 125–127 (GHL). The residue at position 230 (Lys-230) is an N6-(pyridoxal phosphate)lysine. 355–357 (SPF) serves as a coordination point for (6S)-5,6,7,8-tetrahydrofolate.

This sequence belongs to the SHMT family. As to quaternary structure, homodimer. Pyridoxal 5'-phosphate serves as cofactor.

The protein localises to the cytoplasm. It catalyses the reaction (6R)-5,10-methylene-5,6,7,8-tetrahydrofolate + glycine + H2O = (6S)-5,6,7,8-tetrahydrofolate + L-serine. It functions in the pathway one-carbon metabolism; tetrahydrofolate interconversion. Its pathway is amino-acid biosynthesis; glycine biosynthesis; glycine from L-serine: step 1/1. Its function is as follows. Catalyzes the reversible interconversion of serine and glycine with tetrahydrofolate (THF) serving as the one-carbon carrier. This reaction serves as the major source of one-carbon groups required for the biosynthesis of purines, thymidylate, methionine, and other important biomolecules. Also exhibits THF-independent aldolase activity toward beta-hydroxyamino acids, producing glycine and aldehydes, via a retro-aldol mechanism. In Streptococcus pneumoniae (strain P1031), this protein is Serine hydroxymethyltransferase.